Here is a 187-residue protein sequence, read N- to C-terminus: MSIASYAQELKLALHQYPNFPSEGILFEDFLPIFRNPGLFQKLIDAFKLHLEEAFPEVKIDYIVGLESRGFLFGPTLALALGVGFVPVRKAGKLPGECFKATYEKEYGSDLFEIQKNAIPAGSNVIIVDDIIATGGSAAAAGELVEQLEANLLEYNFVMELDFLKGRSKLNAPVFTLLNAQKEALKK.

S68 carries the phosphoserine modification. 133–137 (ATGGS) lines the AMP pocket.

The protein belongs to the purine/pyrimidine phosphoribosyltransferase family. Homodimer. Mg(2+) serves as cofactor.

Its subcellular location is the cytoplasm. It is found in the nucleus. It carries out the reaction AMP + diphosphate = 5-phospho-alpha-D-ribose 1-diphosphate + adenine. It functions in the pathway purine metabolism; AMP biosynthesis via salvage pathway; AMP from adenine: step 1/1. Catalyzes a salvage reaction resulting in the formation of AMP, that is energically less costly than de novo synthesis. This is Adenine phosphoribosyltransferase 1 from Saccharomyces cerevisiae (strain ATCC 204508 / S288c) (Baker's yeast).